We begin with the raw amino-acid sequence, 100 residues long: Small ribosomal subunit protein uS14 (100 aa).

This sequence belongs to the universal ribosomal protein uS14 family. Part of the 30S ribosomal subunit. Contacts proteins S3 and S10.

Its function is as follows. Binds 16S rRNA, required for the assembly of 30S particles and may also be responsible for determining the conformation of the 16S rRNA at the A site. This is Small ribosomal subunit protein uS14 from Synechocystis sp. (strain ATCC 27184 / PCC 6803 / Kazusa).